A 124-amino-acid polypeptide reads, in one-letter code: Fluoride-specific ion channel FluC (124 aa).

4 helical membrane passes run 1–21 (MIAL…LRFA), 37–57 (GTLA…GLFL), 69–89 (GLIV…LDTV), and 99–119 (LALG…WAGL). G76 and T79 together coordinate Na(+).

The protein belongs to the fluoride channel Fluc/FEX (TC 1.A.43) family.

The protein localises to the cell inner membrane. The catalysed reaction is fluoride(in) = fluoride(out). Na(+) is not transported, but it plays an essential structural role and its presence is essential for fluoride channel function. Fluoride-specific ion channel. Important for reducing fluoride concentration in the cell, thus reducing its toxicity. This is Fluoride-specific ion channel FluC from Pseudomonas putida (strain ATCC 700007 / DSM 6899 / JCM 31910 / BCRC 17059 / LMG 24140 / F1).